A 237-amino-acid chain; its full sequence is Uridylate kinase (237 aa).

12-15 (KLSG) contributes to the ATP binding site. The interval 20-25 (GDEGFG) is involved in allosteric activation by GTP. Glycine 54 contributes to the UMP binding site. ATP-binding residues include glycine 55 and arginine 59. UMP contacts are provided by residues aspartate 74 and 135–142 (TGSPFFTT). Threonine 162, tyrosine 168, and aspartate 171 together coordinate ATP.

Belongs to the UMP kinase family. In terms of assembly, homohexamer.

The protein localises to the cytoplasm. It catalyses the reaction UMP + ATP = UDP + ADP. The protein operates within pyrimidine metabolism; CTP biosynthesis via de novo pathway; UDP from UMP (UMPK route): step 1/1. Its activity is regulated as follows. Allosterically activated by GTP. Inhibited by UTP. Catalyzes the reversible phosphorylation of UMP to UDP. The polypeptide is Uridylate kinase (Haemophilus ducreyi (strain 35000HP / ATCC 700724)).